A 58-amino-acid polypeptide reads, in one-letter code: Preprotein translocase subunit SecG (58 aa).

At Met-1 to Gln-32 the chain is on the cytoplasmic side. The chain crosses the membrane as a helical span at residues Pro-33–Phe-54. The Extracellular segment spans residues Gly-55–Pro-58.

The protein belongs to the SEC61-beta family. As to quaternary structure, component of the protein translocase complex. Heterotrimer consisting of alpha (SecY), beta (SecG) and gamma (SecE) subunits. Can form oligomers of the heterotrimer.

It is found in the cell membrane. In terms of biological role, involved in protein export. The function of the beta subunit is unknown, but it may be involved in stabilization of the trimeric complex. The polypeptide is Preprotein translocase subunit SecG (Methanococcoides burtonii (strain DSM 6242 / NBRC 107633 / OCM 468 / ACE-M)).